The primary structure comprises 311 residues: Chalcone synthase 4 (311 aa).

The active site involves C164.

It belongs to the thiolase-like superfamily. Chalcone/stilbene synthases family.

It carries out the reaction (E)-4-coumaroyl-CoA + 3 malonyl-CoA + 3 H(+) = 2',4,4',6'-tetrahydroxychalcone + 3 CO2 + 4 CoA. It participates in secondary metabolite biosynthesis; flavonoid biosynthesis. Its function is as follows. The primary product of this enzyme is 4,2',4',6'-tetrahydroxychalcone (also termed naringenin-chalcone or chalcone) which can under specific conditions spontaneously isomerize into naringenin. The protein is Chalcone synthase 4 (CHS4) of Trifolium subterraneum (Subterranean clover).